A 150-amino-acid chain; its full sequence is 3-hydroxyacyl-[acyl-carrier-protein] dehydratase FabZ (150 aa).

Residue histidine 54 is part of the active site.

Belongs to the thioester dehydratase family. FabZ subfamily.

It localises to the cytoplasm. The enzyme catalyses a (3R)-hydroxyacyl-[ACP] = a (2E)-enoyl-[ACP] + H2O. Functionally, involved in unsaturated fatty acids biosynthesis. Catalyzes the dehydration of short chain beta-hydroxyacyl-ACPs and long chain saturated and unsaturated beta-hydroxyacyl-ACPs. This Pseudoalteromonas translucida (strain TAC 125) protein is 3-hydroxyacyl-[acyl-carrier-protein] dehydratase FabZ.